Consider the following 244-residue polypeptide: 1-(5-phosphoribosyl)-5-[(5-phosphoribosylamino)methylideneamino] imidazole-4-carboxamide isomerase (244 aa).

Asp-7 functions as the Proton acceptor in the catalytic mechanism. Catalysis depends on Asp-129, which acts as the Proton donor.

This sequence belongs to the HisA/HisF family.

The protein localises to the cytoplasm. It catalyses the reaction 1-(5-phospho-beta-D-ribosyl)-5-[(5-phospho-beta-D-ribosylamino)methylideneamino]imidazole-4-carboxamide = 5-[(5-phospho-1-deoxy-D-ribulos-1-ylimino)methylamino]-1-(5-phospho-beta-D-ribosyl)imidazole-4-carboxamide. It functions in the pathway amino-acid biosynthesis; L-histidine biosynthesis; L-histidine from 5-phospho-alpha-D-ribose 1-diphosphate: step 4/9. The chain is 1-(5-phosphoribosyl)-5-[(5-phosphoribosylamino)methylideneamino] imidazole-4-carboxamide isomerase from Pseudoalteromonas atlantica (strain T6c / ATCC BAA-1087).